Consider the following 506-residue polypeptide: Histidine ammonia-lyase (506 aa).

The segment at residues 143–145 (ASG) is a cross-link (5-imidazolinone (Ala-Gly)). A 2,3-didehydroalanine (Ser) modification is found at Ser-144.

The protein belongs to the PAL/histidase family. Post-translationally, contains an active site 4-methylidene-imidazol-5-one (MIO), which is formed autocatalytically by cyclization and dehydration of residues Ala-Ser-Gly.

It is found in the cytoplasm. The enzyme catalyses L-histidine = trans-urocanate + NH4(+). Its pathway is amino-acid degradation; L-histidine degradation into L-glutamate; N-formimidoyl-L-glutamate from L-histidine: step 1/3. The polypeptide is Histidine ammonia-lyase (Salmonella typhimurium (strain LT2 / SGSC1412 / ATCC 700720)).